A 131-amino-acid polypeptide reads, in one-letter code: Small ribosomal subunit protein uS8 (131 aa).

The protein belongs to the universal ribosomal protein uS8 family. As to quaternary structure, part of the 30S ribosomal subunit. Contacts proteins S5 and S12.

Functionally, one of the primary rRNA binding proteins, it binds directly to 16S rRNA central domain where it helps coordinate assembly of the platform of the 30S subunit. This Burkholderia lata (strain ATCC 17760 / DSM 23089 / LMG 22485 / NCIMB 9086 / R18194 / 383) protein is Small ribosomal subunit protein uS8.